A 442-amino-acid chain; its full sequence is Proline--tRNA ligase (442 aa).

It belongs to the class-II aminoacyl-tRNA synthetase family. ProS type 2 subfamily. Homodimer.

It localises to the cytoplasm. It catalyses the reaction tRNA(Pro) + L-proline + ATP = L-prolyl-tRNA(Pro) + AMP + diphosphate. Catalyzes the attachment of proline to tRNA(Pro) in a two-step reaction: proline is first activated by ATP to form Pro-AMP and then transferred to the acceptor end of tRNA(Pro). The polypeptide is Proline--tRNA ligase (Sinorhizobium medicae (strain WSM419) (Ensifer medicae)).